A 1033-amino-acid polypeptide reads, in one-letter code: Isoleucine--tRNA ligase 2 (1033 aa).

The 'HIGH' region motif lies at 47–57; that stretch reads PTANGLPHVGH. Positions 590–594 match the 'KMSKS' region motif; that stretch reads KMSKS. K593 lines the ATP pocket.

Belongs to the class-I aminoacyl-tRNA synthetase family. IleS type 2 subfamily. As to quaternary structure, monomer. Zn(2+) serves as cofactor.

It is found in the cytoplasm. It carries out the reaction tRNA(Ile) + L-isoleucine + ATP = L-isoleucyl-tRNA(Ile) + AMP + diphosphate. Catalyzes the attachment of isoleucine to tRNA(Ile). As IleRS can inadvertently accommodate and process structurally similar amino acids such as valine, to avoid such errors it has two additional distinct tRNA(Ile)-dependent editing activities. One activity is designated as 'pretransfer' editing and involves the hydrolysis of activated Val-AMP. The other activity is designated 'posttransfer' editing and involves deacylation of mischarged Val-tRNA(Ile). The protein is Isoleucine--tRNA ligase 2 of Bacillus cereus (strain ZK / E33L).